The chain runs to 403 residues: Arginine biosynthesis bifunctional protein ArgJ (403 aa).

Polar residues predominate over residues 1–11 (MVQSVLSSTSH). The disordered stretch occupies residues 1 to 21 (MVQSVLSSTSHGSERADMSAA). Positions 161, 183, 194, 273, 398, and 403 each coordinate substrate. The Nucleophile role is filled by T194.

It belongs to the ArgJ family. In terms of assembly, heterotetramer of two alpha and two beta chains.

The protein localises to the cytoplasm. The enzyme catalyses N(2)-acetyl-L-ornithine + L-glutamate = N-acetyl-L-glutamate + L-ornithine. It carries out the reaction L-glutamate + acetyl-CoA = N-acetyl-L-glutamate + CoA + H(+). It participates in amino-acid biosynthesis; L-arginine biosynthesis; L-ornithine and N-acetyl-L-glutamate from L-glutamate and N(2)-acetyl-L-ornithine (cyclic): step 1/1. It functions in the pathway amino-acid biosynthesis; L-arginine biosynthesis; N(2)-acetyl-L-ornithine from L-glutamate: step 1/4. Its function is as follows. Catalyzes two activities which are involved in the cyclic version of arginine biosynthesis: the synthesis of N-acetylglutamate from glutamate and acetyl-CoA as the acetyl donor, and of ornithine by transacetylation between N(2)-acetylornithine and glutamate. In Rhodococcoides fascians (Rhodococcus fascians), this protein is Arginine biosynthesis bifunctional protein ArgJ.